The primary structure comprises 272 residues: Undecaprenyl-diphosphatase (272 aa).

The next 8 helical transmembrane spans lie at 5 to 25 (YSLFVAFVLGVVEGLTEFLPV), 45 to 65 (AKTFEVIIQLGSILAVVVVFW), 88 to 108 (HLTLGHILLAMIPAVGLGLAF), 115 to 135 (LFNPQSVMYALVAGGLLLLAA), 152 to 171 (TYRQAFAIGCFQCLALWPGF), 189 to 209 (YAASEFSFILAVPMMLGASGL), 221 to 241 (GDLPMFAVGFITAFVVALIAI), and 251 to 271 (ISFVPFAIYRFIVAAAVYWVF).

It belongs to the UppP family.

It localises to the cell inner membrane. It catalyses the reaction di-trans,octa-cis-undecaprenyl diphosphate + H2O = di-trans,octa-cis-undecaprenyl phosphate + phosphate + H(+). Functionally, catalyzes the dephosphorylation of undecaprenyl diphosphate (UPP). Confers resistance to bacitracin. In Yersinia enterocolitica serotype O:8 / biotype 1B (strain NCTC 13174 / 8081), this protein is Undecaprenyl-diphosphatase.